A 411-amino-acid chain; its full sequence is Argininosuccinate lyase (411 aa).

Belongs to the lyase 1 family. Argininosuccinate lyase subfamily.

It localises to the cytoplasm. It carries out the reaction 2-(N(omega)-L-arginino)succinate = fumarate + L-arginine. The protein operates within amino-acid biosynthesis; L-arginine biosynthesis; L-arginine from L-ornithine and carbamoyl phosphate: step 3/3. The protein is Argininosuccinate lyase of Legionella pneumophila (strain Lens).